A 404-amino-acid polypeptide reads, in one-letter code: MREAPHVLGIVLAGGEGKRLYPLTADRAKPAVPFGGAYRLIDFVLSNLVNARYLRICVLTQYKSHSLDRHISQNWRLSGLAGEYITPVPAQQRLGPRWYTGSADAIYQSLNLIYDEDPDYIVVFGADHVYRMDPEQMVRFHIDSGAGVTVAGIRVPRADASAFGCIDADDAGTIRDFVEKPLEPPGTPDDPTSTFVSMGNYVFTTKVLIDAIRADADDDHSDHDMGGDIIPRLVADGMAAVYDFSNNEVPGATDRDRAYWRDVGTLDAFYDAHMDLVSVHPVFNLYNKRWPIRGESENLAPAKFVNGGSAQESVVGAGSIISAASVRNSVLSSNVVVEDGAIVEGSVIMPGARVGRGAVVRHAILDKNVVVGPGEMVGVDLDKDRERFAISAGGVVAVGKGVWI.

Residues Tyr99, Gly164, 179–180 (EK), and Ser197 each bind alpha-D-glucose 1-phosphate.

Belongs to the bacterial/plant glucose-1-phosphate adenylyltransferase family.

It carries out the reaction alpha-D-glucose 1-phosphate + ATP + H(+) = ADP-alpha-D-glucose + diphosphate. It participates in capsule biogenesis; capsule polysaccharide biosynthesis. It functions in the pathway glycan biosynthesis; glycogen biosynthesis. Its function is as follows. Involved in the biosynthesis of ADP-glucose, a building block, required in the biosynthesis of maltose-1-phosphate (M1P) and in the elongation reactions to produce linear alpha-1,4-glucans. Catalyzes the reaction between ATP and alpha-D-glucose 1-phosphate (G1P) to produce pyrophosphate and ADP-Glc. The sequence is that of Glucose-1-phosphate adenylyltransferase from Mycobacterium marinum (strain ATCC BAA-535 / M).